The primary structure comprises 258 residues: Lyso-ornithine lipid O-acyltransferase (258 aa).

Residues L7–L29 form a helical membrane-spanning segment.

Belongs to the 1-acyl-sn-glycerol-3-phosphate acyltransferase family. OlsA subfamily.

The protein localises to the membrane. It carries out the reaction a lyso-ornithine lipid + a fatty acyl-[ACP] = an N(2)-[(3R)-3-(acyloxy)acyl]-L-ornithine lipid + holo-[ACP]. It participates in lipid metabolism. Its function is as follows. Catalyzes the second step in the formation of ornithine lipids, which are phosphorus-free membrane lipids. Uses acyl-acyl carrier protein (acyl-AcpP) as an acyl donor and converts lyso-ornithine lipid (LOL) into ornithine lipid (OL). The chain is Lyso-ornithine lipid O-acyltransferase from Pseudomonas aeruginosa (strain ATCC 15692 / DSM 22644 / CIP 104116 / JCM 14847 / LMG 12228 / 1C / PRS 101 / PAO1).